Reading from the N-terminus, the 277-residue chain is (-)-trans-carveol dehydrogenase (277 aa).

10-32 (LITGAARGQGRSHAIKLAEEGAD) provides a ligand contact to NAD(+). Serine 156 provides a ligand contact to substrate. Tyrosine 169 serves as the catalytic Proton acceptor.

This sequence belongs to the short-chain dehydrogenases/reductases (SDR) family. As to quaternary structure, homotetramer.

The enzyme catalyses (1S,5R)-carveol + NAD(+) = (R)-carvone + NADH + H(+). It carries out the reaction (1S,5S)-carveol + NAD(+) = (S)-carvone + NADH + H(+). It functions in the pathway terpene metabolism; limonene degradation. With respect to regulation, competitively inhibited by the product (S)- or (R)-carvone. Catalyzes the oxidation of carveol to carvone, with a strong stereoselectivity since it efficiently converts only the (6S)-stereoisomers, of which (-)-(4R,6S)-trans-carveol is the better substrate. Displays a broad substrate specificity with a preference for substituted cyclohexanols, and does not catalyze the oxidation of primary or short chain aliphatic secondary alcohols. Is also able, albeit more slowly, to oxidize limonene-1,2-diol into 1-hydroxy-2-oxolimonene. This is (-)-trans-carveol dehydrogenase (limC) from Rhodococcus erythropolis (Arthrobacter picolinophilus).